Reading from the N-terminus, the 331-residue chain is Phosphate acyltransferase (331 aa).

It belongs to the PlsX family. As to quaternary structure, homodimer. Probably interacts with PlsY.

The protein localises to the cytoplasm. It carries out the reaction a fatty acyl-[ACP] + phosphate = an acyl phosphate + holo-[ACP]. It functions in the pathway lipid metabolism; phospholipid metabolism. Its function is as follows. Catalyzes the reversible formation of acyl-phosphate (acyl-PO(4)) from acyl-[acyl-carrier-protein] (acyl-ACP). This enzyme utilizes acyl-ACP as fatty acyl donor, but not acyl-CoA. The polypeptide is Phosphate acyltransferase (Malacoplasma penetrans (strain HF-2) (Mycoplasma penetrans)).